A 33-amino-acid polypeptide reads, in one-letter code: Alpha-amanitin proprotein (33 aa).

The propeptide occupies 1-10 (MSDINATRLP). Residue isoleucine 11 is modified to (3R,4R)-4,5-dihydroxyisoleucine; in form alpha-amanitin. Position 11 is a (3R,4S)-4-hydroxyisoleucine; in form gamma-amanitin (isoleucine 11). The segment at residues 11 to 18 (IWGIGCNP) is a cross-link (cyclopeptide (Ile-Pro)). Positions 12-16 (WGIGC) form a cross-link, 2'-cysteinyl-6'-hydroxytryptophan sulfoxide (Trp-Cys). At proline 18 the chain carries 4-hydroxyproline. The propeptide occupies 19–33 (SVGDEVTALLASGEA).

The protein belongs to the MSDIN fungal toxin family. In terms of processing, processed by the macrocyclase-peptidase enzyme POPB to yield a toxic cyclic decapeptide. POPB first removes 10 residues from the N-terminus. Conformational trapping of the remaining peptide forces the enzyme to release this intermediate rather than proceed to macrocyclization. The enzyme rebinds the remaining peptide in a different conformation and catalyzes macrocyclization of the N-terminal 8 residues.

Functionally, major toxin belonging to the bicyclic octapeptides amatoxins that acts by binding non-competitively to RNA polymerase II and greatly slowing the elongation of transcripts from target promoters. This is Alpha-amanitin proprotein from Amanita rimosa.